The sequence spans 776 residues: Protein SEY1 (776 aa).

At 1–681 (MADRSAIQLI…KRSIITTRTH (681 aa)) the chain is on the cytoplasmic side. A GB1/RHD3-type G domain is found at 34 to 263 (GLDYHVISVF…TENYYFKPQY (230 aa)). GTP is bound at residue 44–51 (GSQSSGKS). A helical transmembrane segment spans residues 682-702 (IPPWIYVLLAVLGWNEFVAVI). The Lumenal segment spans residues 703-705 (RNP). A helical membrane pass occupies residues 706–726 (LFVTLTLILGATFFVIHKFGL). The Cytoplasmic portion of the chain corresponds to 727 to 776 (WGPVVNVVQSAVGETRTAIKDKLRQFVVEDHEVKESFEMKDFSKNEQKEK).

The protein belongs to the TRAFAC class dynamin-like GTPase superfamily. GB1/RHD3 GTPase family. RHD3 subfamily. Interacts with RTN1 and YOP1; GTP binding is not required for these interactions.

The protein resides in the endoplasmic reticulum membrane. Its function is as follows. Cooperates with the reticulon proteins RTN1 and RTN2 and the tubule-shaping DP1 family protein YOP1 to generate and maintain the structure of the tubular endoplasmic reticulum network. Has GTPase activity, which is required for its function in ER organization. The chain is Protein SEY1 from Saccharomyces cerevisiae (strain RM11-1a) (Baker's yeast).